An 86-amino-acid polypeptide reads, in one-letter code: Toxin Td1 (86 aa).

Positions 1 to 20 are cleaved as a signal peptide; the sequence is MIRFILFISCFFLIGMVIEC. The LCN-type CS-alpha/beta domain occupies 21–83; it reads KDGYLMEPNG…VWERATNRCG (63 aa). Intrachain disulfides connect cysteine 31-cysteine 82, cysteine 35-cysteine 57, cysteine 43-cysteine 63, and cysteine 47-cysteine 65. A Lysine amide modification is found at lysine 84.

Expressed by the venom gland.

The protein localises to the secreted. Beta toxins bind voltage-independently at site-4 of sodium channels (Nav) and shift the voltage of activation toward more negative potentials thereby affecting sodium channel activation and promoting spontaneous and repetitive firing. This is Toxin Td1 from Tityus discrepans (Venezuelan scorpion).